Consider the following 546-residue polypeptide: uncharacterized protein (546 aa).

A run of 9 helical transmembrane segments spans residues 27–46, 59–78, 83–100, 114–134, 143–163, 176–196, 204–224, 237–257, and 268–288; these read EALV…PFVF, NGLI…ALVT, FALI…YAIL, SVLF…AYAA, PLII…IPIF, MLYS…ALGI, VIAV…VFTA, LSSA…FGVF, and MIWI…LIGW.

It is found in the cell membrane. This is an uncharacterized protein from Bacillus subtilis (strain 168).